We begin with the raw amino-acid sequence, 123 residues long: Small ribosomal subunit protein uS12c (123 aa).

This sequence belongs to the universal ribosomal protein uS12 family. Part of the 30S ribosomal subunit.

The protein resides in the plastid. Its subcellular location is the chloroplast. Its function is as follows. With S4 and S5 plays an important role in translational accuracy. Located at the interface of the 30S and 50S subunits. This is Small ribosomal subunit protein uS12c (rps12) from Oenothera elata subsp. hookeri (Hooker's evening primrose).